We begin with the raw amino-acid sequence, 224 residues long: Cytidylate kinase (224 aa).

11 to 19 (GPAAAGKST) provides a ligand contact to ATP.

This sequence belongs to the cytidylate kinase family. Type 1 subfamily.

Its subcellular location is the cytoplasm. The enzyme catalyses CMP + ATP = CDP + ADP. It catalyses the reaction dCMP + ATP = dCDP + ADP. The chain is Cytidylate kinase from Listeria monocytogenes serovar 1/2a (strain ATCC BAA-679 / EGD-e).